The chain runs to 218 residues: Probable transaldolase 2 (218 aa).

Lysine 83 acts as the Schiff-base intermediate with substrate in catalysis.

This sequence belongs to the transaldolase family. Type 3B subfamily.

The protein resides in the cytoplasm. The enzyme catalyses D-sedoheptulose 7-phosphate + D-glyceraldehyde 3-phosphate = D-erythrose 4-phosphate + beta-D-fructose 6-phosphate. The protein operates within carbohydrate degradation; pentose phosphate pathway; D-glyceraldehyde 3-phosphate and beta-D-fructose 6-phosphate from D-ribose 5-phosphate and D-xylulose 5-phosphate (non-oxidative stage): step 2/3. Transaldolase is important for the balance of metabolites in the pentose-phosphate pathway. This is Probable transaldolase 2 from Listeria innocua serovar 6a (strain ATCC BAA-680 / CLIP 11262).